The following is a 426-amino-acid chain: Serine--tRNA ligase (426 aa).

233-235 (TAE) lines the L-serine pocket. 264–266 (RAE) is an ATP binding site. Glu-287 provides a ligand contact to L-serine. Residue 351–354 (EISS) coordinates ATP. Ser-387 is a binding site for L-serine.

Belongs to the class-II aminoacyl-tRNA synthetase family. Type-1 seryl-tRNA synthetase subfamily. In terms of assembly, homodimer. The tRNA molecule binds across the dimer.

The protein localises to the cytoplasm. The catalysed reaction is tRNA(Ser) + L-serine + ATP = L-seryl-tRNA(Ser) + AMP + diphosphate + H(+). It catalyses the reaction tRNA(Sec) + L-serine + ATP = L-seryl-tRNA(Sec) + AMP + diphosphate + H(+). It functions in the pathway aminoacyl-tRNA biosynthesis; selenocysteinyl-tRNA(Sec) biosynthesis; L-seryl-tRNA(Sec) from L-serine and tRNA(Sec): step 1/1. Its function is as follows. Catalyzes the attachment of serine to tRNA(Ser). Is also able to aminoacylate tRNA(Sec) with serine, to form the misacylated tRNA L-seryl-tRNA(Sec), which will be further converted into selenocysteinyl-tRNA(Sec). This is Serine--tRNA ligase from Clostridium kluyveri (strain NBRC 12016).